The primary structure comprises 889 residues: MMPDDNSNSSTQNSSALYKDLRKEYESLFTLKEDSGLEISPIFNVLPPKKDYPDYYAVIKNPVSFNTLKKRIPHYTDAQQFMNDVVQIPWNAKTYNTRDSGIYKYALVLEKYLKDTIYPNLKEKYPQLVYPDLGPLPDEPGYEEFQQKLREKAEEVARANAARAESSSSMNSTEAARRLRKTRTSVKRESEPGTDTNNDEDYEATDMDIDNPKDADFPDLIRKPLININPYTRKPLRDNRSTTPSHSGTPQPLGPRHRQVSRTQVKRGRPPIIDLPYIQRMKNVMKVLKKEVLDSGIGLTDLFERLPDRHRDANYYIMIANPISLQDINKKVKTRRYKTFQEFQNDFNLMLTNFRISHRGDPESIKISNILEKTFTSLARFELSKPDRSFIPEGELRYPLDEVIVNNISYHVGDWALLRNQNDPQKPIVGQIFRLWKTPDGKQWLNACWYYRPEQTVHRVDRLFYKNEVMKTGQYRDHLVSNLVGKCYVIHFTRYQRGNPDMKLEGPLFVCEFRYNESDKIFNKIRTWKACLPEEIRDLDEATIPVNGRKFFKYPSPIRHLLPANATPHDRVPEPTMGSPDAPPLVGAVYMRPKMQRDDLGEYATSDDCPRYIIRPNDSPEEGQVDIETGTITTNTPTANALPKTGYSSSKLSSLRYNRSSMSLENQNAIGQQQIPLSRVGSPGAGGPLTVQGLKQHQLQRLQQQQHQYQQQKRSQASRYNIPTIIDDLTSQASRGNLGNIMIDAASSFVLPISITKNVDVLQRTDLHSQTKRSGREEMFPWKKTKGEILWFRGPSVIVNERIINSGDPHLSLPLNRWFTTNKKRKLEYEEVEETMEDVTGKDKDDDGLEPDVENEKESLPGPFVLGLRPSAKFTAHRLSMLRPPSSSS.

A Bromo 1 domain is found at Gln12–Asn120. The segment at Glu151 to Gly268 is disordered. Low complexity predominate over residues Arg158–Glu174. Acidic residues predominate over residues Asn197–Ile209. The segment covering Asp210–Arg222 has biased composition (basic and acidic residues). The segment covering Ser241 to Pro250 has biased composition (polar residues). A compositionally biased stretch (basic residues) spans Pro255–Gly268. The Bromo 2 domain maps to Arg280–Glu382. One can recognise a BAH domain in the interval Ile408–Arg526. Positions Gly601–Gln624 are disordered. Position 612 is a phosphotyrosine (Tyr612). Residue Ser682 is modified to Phosphoserine. The interval Glu831–Val865 is disordered.

Belongs to the RSC1 family. As to quaternary structure, component of the two forms of the RSC complex composed of at least either RSC1 or RSC2, and ARP7, ARP9, LDB7, NPL6, RSC3, RSC30, RSC4, RSC58, RSC6, RSC8, RSC9, SFH1, STH1, HTL1 and probably RTT102. The complexes interact with histone and histone variant components of centromeric chromatin.

It localises to the nucleus. Component of the chromatin structure remodeling complex (RSC), which is involved in transcription regulation and nucleosome positioning. RSC is responsible for the transfer of a histone octamer from a nucleosome core particle to naked DNA. The reaction requires ATP and involves an activated RSC-nucleosome intermediate. Remodeling reaction also involves DNA translocation, DNA twist and conformational change. As a reconfigurer of centromeric and flanking nucleosomes, RSC complex is required both for proper kinetochore function in chromosome segregation and, via a PKC1-dependent signaling pathway, for organization of the cellular cytoskeleton. This subunit is involved in meiotic sporulation through regulating IME2 expression, and is also essential for 2-micron plasmid maintenance and for normal REP1 protein localization. The polypeptide is Chromatin structure-remodeling complex subunit RSC2 (RSC2) (Saccharomyces cerevisiae (strain ATCC 204508 / S288c) (Baker's yeast)).